The sequence spans 690 residues: Protein arginine N-methyltransferase 7 (690 aa).

SAM-dependent MTase PRMT-type domains follow at residues 14–357 and 366–690; these read QNSW…YSLW and TKSV…QKKL.

The protein belongs to the class I-like SAM-binding methyltransferase superfamily. Protein arginine N-methyltransferase family. PRMT7 subfamily.

In terms of biological role, essential arginine methyltransferase that can both catalyze the formation of omega-N monomethylarginine (MMA) and symmetrical dimethylarginine (sDMA). Specifically mediates the symmetrical dimethylation of arginine residues in the small nuclear ribonucleoproteins SmD1 and SmD3. This Drosophila yakuba (Fruit fly) protein is Protein arginine N-methyltransferase 7 (Art7).